A 146-amino-acid polypeptide reads, in one-letter code: Hemoglobin subunit beta (146 aa).

N-acetylvaline is present on Val1. One can recognise a Globin domain in the interval His2 to His146. At Thr12 the chain carries Phosphothreonine. Ser44 is modified (phosphoserine). Position 59 is an N6-acetyllysine (Lys59). His63 contributes to the heme b binding site. Lys82 is subject to N6-acetyllysine. His92 lines the heme b pocket. Cys93 carries the post-translational modification S-nitrosocysteine. At Lys144 the chain carries N6-acetyllysine.

Belongs to the globin family. In terms of assembly, heterotetramer of two alpha chains and two beta chains. As to expression, red blood cells.

Its function is as follows. Involved in oxygen transport from the lung to the various peripheral tissues. This is Hemoglobin subunit beta (HBB) from Ailurus fulgens (Himalayan red panda).